Reading from the N-terminus, the 60-residue chain is Cytotoxin SP15c (60 aa).

4 cysteine pairs are disulfide-bonded: Cys-3–Cys-21, Cys-14–Cys-38, Cys-42–Cys-53, and Cys-54–Cys-59.

This sequence belongs to the three-finger toxin family. Short-chain subfamily. Type IA cytotoxin sub-subfamily. In terms of assembly, monomer in solution; Homodimer and oligomer in the presence of negatively charged lipids forming a pore with a size ranging between 20 and 30 Angstroms. Expressed by the venom gland.

Its subcellular location is the secreted. The protein resides in the target cell membrane. In terms of biological role, shows cytolytic activity on many different cells by forming pore in lipid membranes. In vivo, increases heart rate or kills the animal by cardiac arrest. In addition, it binds to heparin with high affinity, interacts with Kv channel-interacting protein 1 (KCNIP1) in a calcium-independent manner, and binds to integrin alpha-V/beta-3 (ITGAV/ITGB3) with moderate affinity. The protein is Cytotoxin SP15c of Naja atra (Chinese cobra).